Reading from the N-terminus, the 454-residue chain is MQPPRERLVVTGRAGWMGMGRGAGRSALGLWPTLAFLLCSFPAAISPCKILKCNSEFWSATSSGSHAPASDDVPEFCAALRTYALCTRRTARTCRGDLAYHSAVHGIEDLMSQHNCSKDGPTSQPRVRTLPPAGDSQERSDSPEICHYEKSFHKHSAAPNYTHCGLFGDPHLRTFTDHFQTCKVQGAWPLIDNNYLNVQVTNTPVLPGSAATATSKLTIIFKNFQECVDQKVYQAEMDELPSAFADGSKNGGDKHGANSLKITEKVSGQHVEIQAKYIGTTIVVRQVGRYLTFAVRMPEEVVNAVEDRDSQGLYLCLRGCPLNQQIDFQAFRANAESPRRPAAASPSPVVPETFPYETAVAKCKEKLPVEDLYYQACVFDLLTTGDVNFTLAAYYALEDGKMLHSNKDKLHLFERTRELPGAVAAAAAAATTFPLAPQILLGTIPLLVLLPVLW.

The first 47 residues, 1 to 47 (MQPPRERLVVTGRAGWMGMGRGAGRSALGLWPTLAFLLCSFPAAISP), serve as a signal peptide directing secretion. Residues 48 to 169 (CKILKCNSEF…NYTHCGLFGD (122 aa)) constitute a propeptide, removed in mature form. Residues 114 to 126 (HNCSKDGPTSQPR) are compositionally biased toward polar residues. The tract at residues 114 to 141 (HNCSKDGPTSQPRVRTLPPAGDSQERSD) is disordered. 2 N-linked (GlcNAc...) asparagine glycosylation sites follow: Asn-115 and Asn-160. Disulfide bonds link Cys-146/Cys-227 and Cys-164/Cys-316. The N-linked (GlcNAc...) asparagine glycan is linked to Asn-388. Residue Ala-427 is the site of GPI-anchor amidated alanine attachment. The propeptide at 428–454 (AAATTFPLAPQILLGTIPLLVLLPVLW) is removed in mature form.

Belongs to the repulsive guidance molecule (RGM) family. Interacts with NEO1, BMP2 and BMP4. Post-translationally, autocatalytically cleaved at low pH; the two chains remain linked via two disulfide bonds. Expressed in gradient in periventricular layers of the developing nervous system. In adult, expressed in scattered cells throughout the brain.

It localises to the cell membrane. Functionally, member of the repulsive guidance molecule (RGM) family that performs several functions in the developing and adult nervous system. Regulates cephalic neural tube closure, inhibits neurite outgrowth and cortical neuron branching, and the formation of mature synapses. Binding to its receptor NEO1/neogenin induces activation of RHOA-ROCK1/Rho-kinase signaling pathway through UNC5B-ARHGEF12/LARG-PTK2/FAK1 cascade, leading to collapse of the neuronal growth cone and neurite outgrowth inhibition. Furthermore, RGMA binding to NEO1/neogenin leads to HRAS inactivation by influencing HRAS-PTK2/FAK1-AKT1 pathway. It also functions as a bone morphogenetic protein (BMP) coreceptor that may signal through SMAD1, SMAD5, and SMAD8. The sequence is that of Repulsive guidance molecule A (Rgma) from Mus musculus (Mouse).